A 1042-amino-acid polypeptide reads, in one-letter code: Signal-induced proliferation-associated protein 1 (1042 aa).

Disordered regions lie at residues 1-87 (MPMW…TSTR) and 132-153 (SQGM…EDQA). Phosphothreonine is present on threonine 64. Serine 67 carries the post-translational modification Phosphoserine. Polar residues predominate over residues 134–146 (GMGSHSEASSGTL). Serine 182, serine 304, and serine 314 each carry phosphoserine. The 219-residue stretch at 321–539 (LLTLDEQVLS…RTRQQYLQDL (219 aa)) folds into the Rap-GAP domain. In terms of domain architecture, PDZ spans 687–763 (ELALPRDGQG…VCVTVLPPDE (77 aa)). Serine 817, serine 839, and serine 912 each carry phosphoserine. A disordered region spans residues 830–903 (EFLHSQNSLS…PAPELRASFL (74 aa)). The span at 832–845 (LHSQNSLSPRSSLS) shows a compositional bias: low complexity. Residues 946 to 980 (LSREGQPIPESGDPKGTPKSDAEPEPGNLSEKVSH) form a disordered region. The span at 957–967 (GDPKGTPKSDA) shows a compositional bias: basic and acidic residues. Positions 972-1034 (GNLSEKVSHL…TRLLLASKQL (63 aa)) form a coiled coil.

Interacts with RRP1B; the interaction leads to inhibition of SIPA1 GTPase activity. In terms of tissue distribution, expressed in fetal as well as in adult tissues. Expressed abundantly in the lymphoid tissues such as thymus, spleen and peripheral blood lymphocytes and also shows a significant expression in the spinal cord.

Its subcellular location is the nucleus. The protein localises to the cytoplasm. It localises to the perinuclear region. The protein resides in the endomembrane system. GTPase activator for the nuclear Ras-related regulatory proteins Rap1 and Rap2 in vitro, converting them to the putatively inactive GDP-bound state. Affects cell cycle progression. The sequence is that of Signal-induced proliferation-associated protein 1 (SIPA1) from Homo sapiens (Human).